Consider the following 315-residue polypeptide: uncharacterized protein (315 aa).

The span at 296-308 (RSKLRKGTHKRTP) shows a compositional bias: basic residues. Positions 296-315 (RSKLRKGTHKRTPGRAGDAD) are disordered.

The protein belongs to the metallo-dependent hydrolases superfamily. Peptidase M19 family.

This is an uncharacterized protein from Acinetobacter calcoaceticus.